A 116-amino-acid chain; its full sequence is Non-specific lipid-transfer protein AP10 (116 aa).

The first 26 residues, 1–26 (MKGTSMGVAILAMIVMAQLMVHPSVA), serve as a signal peptide directing secretion. 4 cysteine pairs are disulfide-bonded: Cys-29-Cys-76, Cys-39-Cys-53, Cys-54-Cys-98, and Cys-74-Cys-112.

It belongs to the plant LTP family. In terms of tissue distribution, in germinating seeds, detected in the entire surface of the cotyledons, shoot meristem, inter-cotyledon space, primary xylem and immature vascular elements (at protein level). Expressed in seeds, but not the aerial parts of the plant.

It localises to the secreted. The protein localises to the extracellular space. It is found in the membrane. Plant non-specific lipid-transfer proteins transfer phospholipids as well as galactolipids across membranes. May play a role in wax or cutin deposition in the cell walls of expanding epidermal cells and certain secretory tissues. Permeabilizes the membrane of fungal spores, inhibits germination of the spores of the fungus F.solani at a concentration of 40 ug/ml. Inhibits the growth of F.solani with an IC(50) of 6.5 ug/ml, weakly inhibits the growth of the fungus A.alternata. Binds oleoyl-CoA. The sequence is that of Non-specific lipid-transfer protein AP10 from Helianthus annuus (Common sunflower).